We begin with the raw amino-acid sequence, 461 residues long: Acetylornithine aminotransferase, mitochondrial (461 aa).

The disordered stretch occupies residues 36–56; that stretch reads YATASQLTHPDPTEDSPSGKM. Lys312 is modified (N6-(pyridoxal phosphate)lysine).

It belongs to the class-III pyridoxal-phosphate-dependent aminotransferase family. It depends on pyridoxal 5'-phosphate as a cofactor.

The protein localises to the mitochondrion matrix. It catalyses the reaction N(2)-acetyl-L-ornithine + 2-oxoglutarate = N-acetyl-L-glutamate 5-semialdehyde + L-glutamate. The protein operates within amino-acid biosynthesis; L-arginine biosynthesis; N(2)-acetyl-L-ornithine from L-glutamate: step 4/4. This is Acetylornithine aminotransferase, mitochondrial (arg-8) from Neurospora crassa (strain ATCC 24698 / 74-OR23-1A / CBS 708.71 / DSM 1257 / FGSC 987).